The following is a 262-amino-acid chain: 3-methyl-2-oxobutanoate hydroxymethyltransferase (262 aa).

D42 and D81 together coordinate Mg(2+). 3-methyl-2-oxobutanoate-binding positions include 42–43, D81, and K110; that span reads DS. E112 is a Mg(2+) binding site. E180 (proton acceptor) is an active-site residue.

This sequence belongs to the PanB family. Homodecamer; pentamer of dimers. It depends on Mg(2+) as a cofactor.

It is found in the cytoplasm. The enzyme catalyses 3-methyl-2-oxobutanoate + (6R)-5,10-methylene-5,6,7,8-tetrahydrofolate + H2O = 2-dehydropantoate + (6S)-5,6,7,8-tetrahydrofolate. It participates in cofactor biosynthesis; (R)-pantothenate biosynthesis; (R)-pantoate from 3-methyl-2-oxobutanoate: step 1/2. In terms of biological role, catalyzes the reversible reaction in which hydroxymethyl group from 5,10-methylenetetrahydrofolate is transferred onto alpha-ketoisovalerate to form ketopantoate. This is 3-methyl-2-oxobutanoate hydroxymethyltransferase from Legionella pneumophila (strain Paris).